The following is a 172-amino-acid chain: NAD(P)H-quinone oxidoreductase subunit I, chloroplastic (172 aa).

2 consecutive 4Fe-4S ferredoxin-type domains span residues 55 to 84 and 95 to 124; these read GRIHFEFDKCIACEVCVRVCPIDLPVVDWK and LNYSIDFGICIFCGNCVEYCPTNCLSMTEE. Residues Cys-64, Cys-67, Cys-70, Cys-74, Cys-104, Cys-107, Cys-110, and Cys-114 each coordinate [4Fe-4S] cluster.

It belongs to the complex I 23 kDa subunit family. In terms of assembly, NDH is composed of at least 16 different subunits, 5 of which are encoded in the nucleus. It depends on [4Fe-4S] cluster as a cofactor.

The protein resides in the plastid. Its subcellular location is the chloroplast thylakoid membrane. It catalyses the reaction a plastoquinone + NADH + (n+1) H(+)(in) = a plastoquinol + NAD(+) + n H(+)(out). The catalysed reaction is a plastoquinone + NADPH + (n+1) H(+)(in) = a plastoquinol + NADP(+) + n H(+)(out). Its function is as follows. NDH shuttles electrons from NAD(P)H:plastoquinone, via FMN and iron-sulfur (Fe-S) centers, to quinones in the photosynthetic chain and possibly in a chloroplast respiratory chain. The immediate electron acceptor for the enzyme in this species is believed to be plastoquinone. Couples the redox reaction to proton translocation, and thus conserves the redox energy in a proton gradient. This Capsella bursa-pastoris (Shepherd's purse) protein is NAD(P)H-quinone oxidoreductase subunit I, chloroplastic.